The chain runs to 140 residues: Putative pre-16S rRNA nuclease (140 aa).

Belongs to the YqgF nuclease family.

The protein localises to the cytoplasm. Functionally, could be a nuclease involved in processing of the 5'-end of pre-16S rRNA. The protein is Putative pre-16S rRNA nuclease of Endomicrobium trichonymphae.